Consider the following 276-residue polypeptide: HUWE1-associated protein modifying stress responses 2 (276 aa).

Disordered stretches follow at residues 146 to 182, 204 to 238, and 252 to 276; these read GKVP…TPVG, ISMR…PNSL, and VRKR…NRMV. A compositionally biased stretch (pro residues) spans 149–165; that stretch reads PPTPQPPRTPRMSPRPP. 2 stretches are compositionally biased toward low complexity: residues 166-179 and 208-219; these read AAAS…ESGT and SGPPGSSSQDGG. Residues 252-276 are nuclear localization signal; sequence VRKRTSAQFGDGSADSPLHKRNRMV.

It belongs to the HAPSTR1 family. In terms of assembly, homooligomer. Heterooligomer with HAPSTR1; the interaction is direct and stabilizes HAPSTR1 independently of HUWE1. Interacts with HUWE1.

It localises to the nucleus. Together with HAPSTR1 plays a central regulatory role in the cellular response to molecular stressors, such as DNA damage, nutrient scarcity, and protein misfolding. Regulates these multiple stress response signaling pathways by stabilizing HAPSTR1, but also independently of HAPSTR1. In Mus musculus (Mouse), this protein is HUWE1-associated protein modifying stress responses 2.